Consider the following 657-residue polypeptide: Major core protein 4b (657 aa).

Residues 1–61 (MESDSNIAIE…ITEEDVISAG (61 aa)) constitute a propeptide that is removed on maturation.

This sequence belongs to the poxviridae protein P4b family. In terms of processing, the precursor is cleaved to a mature protein during virion maturation. Proteolytic cleavage of major core proteins P4a (A10L), P4b (A3L), and VP8 (L4R), which occurs at a late stage of core formation, is required for production of infectious mature virions (MV).

Its subcellular location is the virion. Its function is as follows. Major component of the virion core that undergoes proteolytic processing during the immature virion (IV) to mature virion (MV) transition. Essential for the formation of a structurally normal core. The sequence is that of Major core protein 4b from Vertebrata (FPV).